A 343-amino-acid chain; its full sequence is Coiled-coil domain-containing protein 97 (343 aa).

Methionine 1 carries the post-translational modification N-acetylmethionine. The disordered stretch occupies residues methionine 1–proline 37. Threonine 47 is modified (phosphothreonine). 3 disordered regions span residues alanine 200 to leucine 220, glutamine 234 to glutamate 277, and arginine 292 to aspartate 343. Residues leucine 224–glutamine 262 are a coiled coil. Residues glutamine 241–aspartate 261 are compositionally biased toward acidic residues. The segment covering glutamine 262–glutamate 277 has biased composition (basic and acidic residues). Phosphoserine is present on residues serine 275 and serine 337. Acidic residues predominate over residues glutamate 324–aspartate 343.

As to quaternary structure, associates with splicing factor SF3B complex, involved in branch-site recognition.

It is found in the nucleus. Functionally, may play a role pre-mRNA splicing through the association with the splicing factor SF3B complex which is involved in branch-site recognition. The polypeptide is Coiled-coil domain-containing protein 97 (CCDC97) (Homo sapiens (Human)).